Reading from the N-terminus, the 449-residue chain is Trigger factor (449 aa).

The PPIase FKBP-type domain maps to 162–242 (GDFVTIDMTV…VRAVREKQVP (81 aa)). Residues 428 to 449 (APVNLEGGSTPAAEAEPAVSEA) form a disordered region. Residues 438–449 (PAAEAEPAVSEA) show a composition bias toward low complexity.

Belongs to the FKBP-type PPIase family. Tig subfamily.

The protein resides in the cytoplasm. The enzyme catalyses [protein]-peptidylproline (omega=180) = [protein]-peptidylproline (omega=0). Involved in protein export. Acts as a chaperone by maintaining the newly synthesized protein in an open conformation. Functions as a peptidyl-prolyl cis-trans isomerase. The protein is Trigger factor of Acidothermus cellulolyticus (strain ATCC 43068 / DSM 8971 / 11B).